A 136-amino-acid polypeptide reads, in one-letter code: Protein NrdI (136 aa).

Belongs to the NrdI family.

Probably involved in ribonucleotide reductase function. This is Protein NrdI from Escherichia coli O1:K1 / APEC.